The chain runs to 34 residues: Photosystem I reaction center subunit XII (34 aa).

The chain crosses the membrane as a helical span at residues 10–32 (VFVALVVAAHAAVLALRLSISLY).

It belongs to the PsaM family.

It is found in the cellular thylakoid membrane. This Parasynechococcus marenigrum (strain WH8102) protein is Photosystem I reaction center subunit XII.